We begin with the raw amino-acid sequence, 370 residues long: Ubiquitin carboxyl-terminal hydrolase 12 (370 aa).

The Required for plasma membrane localization of USP12/WDR20 motif lies at 1 to 4; the sequence is MEIL. Residues 39–369 form the USP domain; it reads FGLVNFGNTC…SGYILFYQSR (331 aa). The active-site Nucleophile is cysteine 48. The segment at 145-169 is disordered; the sequence is KQEKQNGRLPNGNIDNENNNSTPDP. Polar residues predominate over residues 157 to 168; sequence NIDNENNNSTPD. The Zn(2+) site is built by cysteine 186, cysteine 189, cysteine 233, and cysteine 236. Histidine 317 acts as the Proton acceptor in catalysis.

It belongs to the peptidase C19 family. USP12/USP46 subfamily. As to quaternary structure, interacts with WDR48. Interacts with WDR20; this interaction promotes translocation of the USP12 complex to the plasma membrane. Component of the USP12-WDR20-WDR48 deubiquitinating complex. Component of the USP12-DMWD-WDR48 deubiquitinating complex. Interacts with PHLPP1. Interacts with RBPJ. Interacts with CBP; this interaction blocks the acetyltransferase activity of CREBBP. Interacts with ITCH; the interaction is more efficient when both USP12 and WDR48/UAF1 are involved and may mediate recruitment of the USP12 deubiquitinating complex to Notch. Interacts with OPTN and SQSTM1/p62; the interaction is independent of deubiquitinase activity and may be involved in regulation of autophagic flux. (Microbial infection) Interacts with Epstein-Barr virus protein EBNA3.

It localises to the nucleus. Its subcellular location is the cytoplasm. The protein localises to the cell membrane. It carries out the reaction Thiol-dependent hydrolysis of ester, thioester, amide, peptide and isopeptide bonds formed by the C-terminal Gly of ubiquitin (a 76-residue protein attached to proteins as an intracellular targeting signal).. Its activity is regulated as follows. Activated by interaction with WDR20, WDR48 and DMWD through different allosteric mechanisms. Its function is as follows. Deubiquitinating enzyme that plays various roles in the regulation of the immune response and inflammation. During TCR engagement and activation, translocates into the cytoplasm and deubiquitinates its substrates LAT and TRAT1 and prevents their lysosome-dependent degradation to stabilize the TCR signaling complex at the plasma membrane. Plays an essential role in the selective LPS-induced macrophage response through the activation of NF-kappa-B pathway. In addition, promotes that antiviral immune response through targeting DNA sensor IFI16 to inhibit its proteasome-dependent degradation. Participates in the interferon signaling pathway and antiviral response independently of its deubiquitinase activity by maintaining nuclear phosphorylated STAT1 levels via inhibition of its CREBBP-mediated acetylation and subsequent dephosphorylation. Plays an intrinsic role in promoting the differentiation, activation and proliferation of CD4(+) T-cell by activating the NF-kappa-B signaling pathway through deubiquitinating and stabilizing B-cell lymphoma/leukemia 10/BCL10. In myeloid-derived suppressor cells promotes the activation of the NF-kappa-B via deubiquitination and stabilization of RELA. Regulates the 'Lys-63'-linked polyubiquitin chains of BAX and thereby modulates the mitochondrial apoptotic process. Negative regulator of NOTCH signaling that specifically deubiquitinates non-activated NOTCH receptors to target them for lysosomal degradation; deubiquitination of NOTCH stimulates its transport form late endosomes to lysosomes. Protects neurons against HTT/huntingtin-induced polyglutamine expansion-dependent neurodegeneration through regulation of autophagic flux. This function is independent of deubiquitinase activity or of other components of the USP12-WDR20-WDR48 deubiquitinating complex. In complex with WDR48, acts as a potential tumor suppressor by positively regulating PHLPP1 stability. (Microbial infection) Forms a complex with Epstein-Barr virus protein EBNA3 which is an active deubiquitinase activity that may select specific substrates to promote B-lymphocyte transformation. This is Ubiquitin carboxyl-terminal hydrolase 12 (USP12) from Homo sapiens (Human).